We begin with the raw amino-acid sequence, 161 residues long: 3-isopropylmalate dehydratase small subunit 1 (161 aa).

The protein belongs to the LeuD family. LeuD type 2 subfamily. Heterodimer of LeuC and LeuD.

It carries out the reaction (2R,3S)-3-isopropylmalate = (2S)-2-isopropylmalate. The protein operates within amino-acid biosynthesis; L-leucine biosynthesis; L-leucine from 3-methyl-2-oxobutanoate: step 2/4. Catalyzes the isomerization between 2-isopropylmalate and 3-isopropylmalate, via the formation of 2-isopropylmaleate. The protein is 3-isopropylmalate dehydratase small subunit 1 (leuD1) of Archaeoglobus fulgidus (strain ATCC 49558 / DSM 4304 / JCM 9628 / NBRC 100126 / VC-16).